The chain runs to 139 residues: Putative pre-16S rRNA nuclease (139 aa).

The protein belongs to the YqgF nuclease family.

The protein resides in the cytoplasm. Could be a nuclease involved in processing of the 5'-end of pre-16S rRNA. This chain is Putative pre-16S rRNA nuclease, found in Streptococcus thermophilus (strain CNRZ 1066).